The primary structure comprises 326 residues: Biotin synthase (326 aa).

The Radical SAM core domain occupies 48–277 (FGAGKVDLCS…SARIRMAGGR (230 aa)). [4Fe-4S] cluster-binding residues include C66, C70, and C73. S110, C142, C202, and R272 together coordinate [2Fe-2S] cluster.

Belongs to the radical SAM superfamily. Biotin synthase family. Homodimer. It depends on [4Fe-4S] cluster as a cofactor. [2Fe-2S] cluster serves as cofactor.

It catalyses the reaction (4R,5S)-dethiobiotin + (sulfur carrier)-SH + 2 reduced [2Fe-2S]-[ferredoxin] + 2 S-adenosyl-L-methionine = (sulfur carrier)-H + biotin + 2 5'-deoxyadenosine + 2 L-methionine + 2 oxidized [2Fe-2S]-[ferredoxin]. It functions in the pathway cofactor biosynthesis; biotin biosynthesis; biotin from 7,8-diaminononanoate: step 2/2. Catalyzes the conversion of dethiobiotin (DTB) to biotin by the insertion of a sulfur atom into dethiobiotin via a radical-based mechanism. In Heliobacterium modesticaldum (strain ATCC 51547 / Ice1), this protein is Biotin synthase.